The primary structure comprises 398 residues: Cytochrome b (398 aa).

The chain crosses the membrane as a helical span at residues 45–65 (LGSIAGIALVIQIITGVILAM). The heme b site is built by H95 and H109. Transmembrane regions (helical) follow at residues 96–116 (AVGA…GLYY), 129–149 (IGII…VLPW), 164–184 (FSAI…GFSV), 192–212 (FFSL…LHLV), 245–265 (FVGF…EPNY), 277–297 (PLVT…YAIL), 304–324 (LGGV…PWLD), 339–359 (MAFW…GQPA), and 366–386 (ISRF…PLIG). The heme b site is built by H196 and H210.

The protein belongs to the cytochrome b family. In terms of assembly, the main subunits of complex b-c1 are: cytochrome b, cytochrome c1 and the Rieske protein. Heme b serves as cofactor.

The protein resides in the cell membrane. In terms of biological role, component of the ubiquinol-cytochrome c reductase complex (complex III or cytochrome b-c1 complex), which is a respiratory chain that generates an electrochemical potential coupled to ATP synthesis. The sequence is that of Cytochrome b (petB) from Rickettsia conorii (strain ATCC VR-613 / Malish 7).